Reading from the N-terminus, the 180-residue chain is Large ribosomal subunit protein uL6 (180 aa).

It belongs to the universal ribosomal protein uL6 family. In terms of assembly, part of the 50S ribosomal subunit.

Its function is as follows. This protein binds to the 23S rRNA, and is important in its secondary structure. It is located near the subunit interface in the base of the L7/L12 stalk, and near the tRNA binding site of the peptidyltransferase center. The chain is Large ribosomal subunit protein uL6 from Salinispora tropica (strain ATCC BAA-916 / DSM 44818 / JCM 13857 / NBRC 105044 / CNB-440).